A 43-amino-acid polypeptide reads, in one-letter code: MTTKFVFDLLAPDDILHPSNHVNLIIRLIEVEHIIIATTMPAV.

The protein belongs to the coronaviruses ns4.9 protein family.

This is Non-structural protein of 4.9 kDa from Bos taurus (Bovine).